The sequence spans 101 residues: Large ribosomal subunit protein uL24 (101 aa).

It belongs to the universal ribosomal protein uL24 family. As to quaternary structure, part of the 50S ribosomal subunit.

In terms of biological role, one of two assembly initiator proteins, it binds directly to the 5'-end of the 23S rRNA, where it nucleates assembly of the 50S subunit. Its function is as follows. One of the proteins that surrounds the polypeptide exit tunnel on the outside of the subunit. This is Large ribosomal subunit protein uL24 from Borreliella afzelii (strain PKo) (Borrelia afzelii).